The following is a 232-amino-acid chain: Peroxiredoxin (232 aa).

One can recognise a Thioredoxin domain in the interval 6–161 (PSIGEKFPEI…ILRLIESLQI (156 aa)). Cys-48 functions as the Cysteine sulfenic acid (-SOH) intermediate in the catalytic mechanism. Residue Arg-124 coordinates substrate. Cysteines 203 and 209 form a disulfide.

This sequence belongs to the peroxiredoxin family. Prx6 subfamily. Homodecamer. Pentamer of dimers that assemble into a ring structure.

It localises to the cytoplasm. It catalyses the reaction a hydroperoxide + [thioredoxin]-dithiol = an alcohol + [thioredoxin]-disulfide + H2O. Thiol-specific peroxidase that catalyzes the reduction of hydrogen peroxide and organic hydroperoxides to water and alcohols, respectively. Plays a role in cell protection against oxidative stress by detoxifying peroxides. This is Peroxiredoxin from Hyperthermus butylicus (strain DSM 5456 / JCM 9403 / PLM1-5).